Reading from the N-terminus, the 314-residue chain is NADH-ubiquinone oxidoreductase chain 1 (314 aa).

The next 8 membrane-spanning stretches (helical) occupy residues 5–25 (IMPL…VAFL), 78–98 (FSPV…PYLI), 105–125 (LGVL…MIAG), 152–172 (ALIL…SFYF), 176–196 (YVWF…SCLA), 227–247 (LIFL…VVIF), 251–271 (DIYS…FIWV), and 294–314 (LSLN…SLLF).

Belongs to the complex I subunit 1 family.

The protein localises to the mitochondrion inner membrane. It carries out the reaction a ubiquinone + NADH + 5 H(+)(in) = a ubiquinol + NAD(+) + 4 H(+)(out). In terms of biological role, core subunit of the mitochondrial membrane respiratory chain NADH dehydrogenase (Complex I) that is believed to belong to the minimal assembly required for catalysis. Complex I functions in the transfer of electrons from NADH to the respiratory chain. The immediate electron acceptor for the enzyme is believed to be ubiquinone. This Anopheles gambiae (African malaria mosquito) protein is NADH-ubiquinone oxidoreductase chain 1 (mt:ND1).